The sequence spans 303 residues: MALTSEQRAEIEAQRSEPQLTSRPTVAAMENLLFTPFEVLDHGFLRVVDYMGDDGAVVQAARVSYGRGTKKVSEDAGLIRYLMRHRHSTPFEMCEIKFHVKLPVFVARQWIRHRMASVNEYSARYSILDREFYLPAMDQVAAQSSSNRQGRSDALDADTAHQVLEILRRDASQCYDDYESLLNPEGRGLARELARINLTLNTYTQWYWKIDLHNLMHFLALRADPHAQYEIRVYAEKMIEILKAWVPATAAAFEEYRLGAFTLSAGMLKVVRRRLAGETVTQENSGLTKREWSEMAAVLDGAS.

A disordered region spans residues 1–21 (MALTSEQRAEIEAQRSEPQLT). The ThyX domain maps to 43–256 (GFLRVVDYMG…PATAAAFEEY (214 aa)). FAD-binding positions include Thr-89, 112 to 114 (RHR), and Glu-120. Residues 109–112 (QWIR), 120–124 (EYSAR), and Arg-195 each bind dUMP. Positions 112–122 (RHRMASVNEYS) match the ThyX motif motif. Residues 211–213 (DLH) and His-217 each bind FAD. Arg-222 is a dUMP binding site. Arg-222 functions as the Involved in ionization of N3 of dUMP, leading to its activation in the catalytic mechanism.

This sequence belongs to the thymidylate synthase ThyX family. As to quaternary structure, homotetramer. FAD serves as cofactor.

It catalyses the reaction dUMP + (6R)-5,10-methylene-5,6,7,8-tetrahydrofolate + NADPH + H(+) = dTMP + (6S)-5,6,7,8-tetrahydrofolate + NADP(+). It participates in pyrimidine metabolism; dTTP biosynthesis. Its function is as follows. Catalyzes the reductive methylation of 2'-deoxyuridine-5'-monophosphate (dUMP) to 2'-deoxythymidine-5'-monophosphate (dTMP) while utilizing 5,10-methylenetetrahydrofolate (mTHF) as the methyl donor, and NADPH and FADH(2) as the reductant. The protein is Flavin-dependent thymidylate synthase of Gluconobacter oxydans (strain 621H) (Gluconobacter suboxydans).